Here is a 310-residue protein sequence, read N- to C-terminus: N-acetyl-gamma-glutamyl-phosphate reductase (310 aa).

Residue C117 is part of the active site.

The protein belongs to the NAGSA dehydrogenase family. Type 2 subfamily.

The protein localises to the cytoplasm. It catalyses the reaction N-acetyl-L-glutamate 5-semialdehyde + phosphate + NADP(+) = N-acetyl-L-glutamyl 5-phosphate + NADPH + H(+). It functions in the pathway amino-acid biosynthesis; L-arginine biosynthesis; N(2)-acetyl-L-ornithine from L-glutamate: step 3/4. Catalyzes the NADPH-dependent reduction of N-acetyl-5-glutamyl phosphate to yield N-acetyl-L-glutamate 5-semialdehyde. This chain is N-acetyl-gamma-glutamyl-phosphate reductase, found in Rhizobium johnstonii (strain DSM 114642 / LMG 32736 / 3841) (Rhizobium leguminosarum bv. viciae).